Reading from the N-terminus, the 1592-residue chain is Probable serine/threonine-protein kinase DDB_G0293958 (1592 aa).

In terms of domain architecture, Protein kinase 1 spans 1 to 302 (MTGFEIFKKK…CLNYLKEKLI (302 aa)). ATP is bound by residues 2-10 (TGFEIFKKK) and K43. Residue D158 is the Proton acceptor of the active site. Disordered regions lie at residues 348–402 (INNN…NNNN), 455–526 (FNDI…SNYN), and 837–867 (KNNNNFYNNNNNNNNNNNNNNNNNNNSNDKS). Over residues 349 to 402 (NNNNNNNNNNNNNNNNNNNNNNNNNNNNNNNNNNNNNNNNNNNNNNNNNNNNNN) the composition is skewed to low complexity. Positions 461–518 (STTGEEEEEEKKDNLKRQNENNQIEQEDKGEKHLKETLNNNNNNNNNNNNNNNNNNNN) form a coiled coil. Over residues 486 to 496 (QEDKGEKHLKE) the composition is skewed to basic and acidic residues. 2 stretches are compositionally biased toward low complexity: residues 499–526 (NNNNNNNNNNNNNNNNNNNNNNNNSNYN) and 837–864 (KNNNNFYNNNNNNNNNNNNNNNNNNNSN). The Protein kinase 2 domain occupies 1342–1592 (LGTYNLIGDS…KELIECLNKL (251 aa)). ATP is bound by residues 1348 to 1356 (IGDSVFRNI) and K1376. Catalysis depends on D1474, which acts as the Proton acceptor.

This sequence belongs to the protein kinase superfamily. Ser/Thr protein kinase family.

It catalyses the reaction L-seryl-[protein] + ATP = O-phospho-L-seryl-[protein] + ADP + H(+). The enzyme catalyses L-threonyl-[protein] + ATP = O-phospho-L-threonyl-[protein] + ADP + H(+). In Dictyostelium discoideum (Social amoeba), this protein is Probable serine/threonine-protein kinase DDB_G0293958.